Here is a 111-residue protein sequence, read N- to C-terminus: Dynein light chain Tctex-type (111 aa).

It belongs to the dynein light chain Tctex-type family. The cytoplasmic dynein complex consists of two catalytic heavy chains (HCs) and a number of non-catalytic subunits presented by intermediate chains (ICs), light intermediate chains (LICs) and light chains (LCs).

It is found in the cytoplasm. The protein resides in the cytoskeleton. Its function is as follows. Acts as one of several non-catalytic accessory components of the cytoplasmic dynein complex that are thought to be involved in linking dynein to cargos and to adapter proteins that regulate dynein function. Cytoplasmic dynein acts as a motor for the intracellular retrograde motility of vesicles and organelles along microtubules. Required for spermatid differentiation. Is not required for polarized transport in rhabdomere development and appears to be a non-essential component of the cytoplasmic dynein complex. In Drosophila melanogaster (Fruit fly), this protein is Dynein light chain Tctex-type (Dlc90F).